A 577-amino-acid polypeptide reads, in one-letter code: Arginine--tRNA ligase (577 aa).

A 'HIGH' region motif is present at residues 122–132 (PNVAKEMHVGH).

It belongs to the class-I aminoacyl-tRNA synthetase family. Monomer.

The protein resides in the cytoplasm. The catalysed reaction is tRNA(Arg) + L-arginine + ATP = L-arginyl-tRNA(Arg) + AMP + diphosphate. In Klebsiella pneumoniae subsp. pneumoniae (strain ATCC 700721 / MGH 78578), this protein is Arginine--tRNA ligase.